The sequence spans 255 residues: Ciliogenesis and planar polarity effector 2 (255 aa).

A small GTPase-like region spans residues 52–255 (PADIASYKLF…VIAGLVGGAD (204 aa)). GTP-binding positions include 64-71 (GRSGAGKT) and 177-180 (TKLD).

It belongs to the small GTPase superfamily. Rab family.

The protein localises to the cytoplasm. It is found in the cytoskeleton. Its subcellular location is the cilium basal body. Its function is as follows. Potential effector of the planar cell polarity signaling pathway. Plays a role in targeted membrane trafficking most probably at the level of vesicle fusion with membranes. Involved in cilium biogenesis by regulating the transport of cargo proteins to the basal body and to the apical tips of cilia. More generally involved in exocytosis in secretory cells. In Xenopus tropicalis (Western clawed frog), this protein is Ciliogenesis and planar polarity effector 2 (cplane2).